The primary structure comprises 295 residues: Acetylglutamate kinase (295 aa).

Residues G64 to G65, R86, and N190 each bind substrate.

Belongs to the acetylglutamate kinase family. ArgB subfamily.

It is found in the cytoplasm. It catalyses the reaction N-acetyl-L-glutamate + ATP = N-acetyl-L-glutamyl 5-phosphate + ADP. Its pathway is amino-acid biosynthesis; L-arginine biosynthesis; N(2)-acetyl-L-ornithine from L-glutamate: step 2/4. In terms of biological role, catalyzes the ATP-dependent phosphorylation of N-acetyl-L-glutamate. This chain is Acetylglutamate kinase, found in Oleidesulfovibrio alaskensis (strain ATCC BAA-1058 / DSM 17464 / G20) (Desulfovibrio alaskensis).